The chain runs to 91 residues: Protein sigN139 (91 aa).

N-linked (GlcNAc...) asparagine glycans are attached at residues Asn-23 and Asn-34. The helical transmembrane segment at 46 to 68 (LLPVVAFISGTVTSITGLVAGAL) threads the bilayer.

Its subcellular location is the membrane. In Dictyostelium discoideum (Social amoeba), this protein is Protein sigN139.